The chain runs to 660 residues: Phosphatidylinositol-3-phosphate phosphatase MTMR7 (660 aa).

Residues 126–504 (GWLLVDLSEE…FTYKFWNGMY (379 aa)) form the Myotubularin phosphatase domain. 3 residues coordinate a 1,2-diacyl-sn-glycero-3-phospho-(1D-myo-inositol-3-phosphate): asparagine 250, asparagine 275, and isoleucine 276. The active-site Phosphocysteine intermediate is cysteine 338. Serine 339, aspartate 340, glycine 341, tryptophan 342, aspartate 343, arginine 344, and arginine 384 together coordinate a 1,2-diacyl-sn-glycero-3-phospho-(1D-myo-inositol-3-phosphate). Residues 514–548 (RQSVTDYLMAVKEESQQLEEELESLEERLEKIQKV) are a coiled coil. The segment at 550–660 (LHGTKVKSKQ…DSDEAVFLTA (111 aa)) is disordered. The segment covering 566–596 (SGFSTSDHSTANTPQDYSGNSKSFPSRSPSQ) has biased composition (polar residues). The residue at position 578 (threonine 578) is a Phosphothreonine. A compositionally biased stretch (basic and acidic residues) spans 641–653 (APSEDSGKDRDSD).

It belongs to the protein-tyrosine phosphatase family. Non-receptor class myotubularin subfamily. In terms of assembly, heterodimer (via C-terminus) with MTMR9 (via coiled coil domain); the interaction enhances MTMR7 catalytic activity. Does not homodimerize. Interacts with RAB1B (in GDP-bound form). As to expression, highly expressed in brain (at protein level). Expressed at low levels in liver, kidney and testis.

Its subcellular location is the cytoplasm. It is found in the endomembrane system. The catalysed reaction is a 1,2-diacyl-sn-glycero-3-phospho-(1D-myo-inositol-3-phosphate) + H2O = a 1,2-diacyl-sn-glycero-3-phospho-(1D-myo-inositol) + phosphate. The enzyme catalyses 1D-myo-inositol 1,3-bisphosphate + H2O = 1D-myo-inositol 1-phosphate + phosphate. With respect to regulation, interaction with MTMR9 increases phosphatase activity. Functionally, lipid phosphatase that specifically dephosphorylates the D-3 position of phosphatidylinositol 3-phosphate (PtdIns(3)P) and inositol 1,3-bisphosphate (Ins(1,3)P2). The protein is Phosphatidylinositol-3-phosphate phosphatase MTMR7 of Mus musculus (Mouse).